We begin with the raw amino-acid sequence, 150 residues long: MPKKSVRHIKIREIISNEQIETQDELVKRLNDYDLNVTQATVSRDIKELQLIKVPIPSGQYVYSLPNDRKFHPLEKLGRYLMDSFVNIDGTDNLLVLKTLPGNAQSIGAILDQINWEEVLGTICGDDTCLIICRSKEASDEIKSRIFNLL.

The protein belongs to the ArgR family.

The protein resides in the cytoplasm. The protein operates within amino-acid biosynthesis; L-arginine biosynthesis [regulation]. Functionally, regulates arginine biosynthesis genes. The sequence is that of Arginine repressor from Staphylococcus aureus (strain Mu3 / ATCC 700698).